The chain runs to 119 residues: Large ribosomal subunit protein uL18 (119 aa).

This sequence belongs to the universal ribosomal protein uL18 family. In terms of assembly, part of the 50S ribosomal subunit; part of the 5S rRNA/L5/L18/L25 subcomplex. Contacts the 5S and 23S rRNAs.

Functionally, this is one of the proteins that bind and probably mediate the attachment of the 5S RNA into the large ribosomal subunit, where it forms part of the central protuberance. The chain is Large ribosomal subunit protein uL18 from Clostridium tetani (strain Massachusetts / E88).